A 156-amino-acid polypeptide reads, in one-letter code: Enhancer of split M1 protein (156 aa).

An N-terminal signal peptide occupies residues 1 to 19 (MMSQTLTLCCLALVACVYG). Kazal-like domains lie at 23 to 81 (STND…AWCS) and 96 to 156 (KLEV…EEKC). 5 disulfide bridges follow: cysteine 29–cysteine 62, cysteine 33–cysteine 55, cysteine 102–cysteine 135, cysteine 106–cysteine 128, and cysteine 114–cysteine 156.

In Drosophila melanogaster (Fruit fly), this protein is Enhancer of split M1 protein (Kaz-m1).